Here is a 344-residue protein sequence, read N- to C-terminus: Succinylglutamate desuccinylase (344 aa).

Residues His63, Glu66, and His160 each coordinate Zn(2+). The active site involves Glu224.

The protein belongs to the AspA/AstE family. Succinylglutamate desuccinylase subfamily. The cofactor is Zn(2+).

It carries out the reaction N-succinyl-L-glutamate + H2O = L-glutamate + succinate. The protein operates within amino-acid degradation; L-arginine degradation via AST pathway; L-glutamate and succinate from L-arginine: step 5/5. Its function is as follows. Transforms N(2)-succinylglutamate into succinate and glutamate. This chain is Succinylglutamate desuccinylase, found in Shewanella sp. (strain MR-7).